The following is a 1131-amino-acid chain: Probable secreted beta-glucosidase adg3 (1131 aa).

A signal peptide spans 1 to 23 (MPSKIEKICLLLLGFTAASNVNA). 7 N-linked (GlcNAc...) asparagine glycosylation sites follow: N58, N123, N252, N551, N593, N631, and N689. The interval 609-819 (GTTSSTSEIV…SSPISSNSVT (211 aa)) is disordered. The segment covering 623-715 (SNSNTGSLNG…YSDPTTTITS (93 aa)) has biased composition (low complexity). The span at 716 to 725 (EVSSILSSPT) shows a compositional bias: polar residues. Residues 726 to 737 (SMQSSVSRPQSS) show a composition bias toward low complexity. The span at 738 to 763 (GDASGFNTIFTSISQSSDGETSGYTI) shows a compositional bias: polar residues. Low complexity-rich tracts occupy residues 764-773 (SSNSSQNSAS) and 780-819 (TSSS…NSVT). N766, N806, and N857 each carry an N-linked (GlcNAc...) asparagine glycan. The segment covering 893–909 (STSNSGSTSYSIPSSSS) has biased composition (low complexity). Residues 893–918 (STSNSGSTSYSIPSSSSRNEGTTSYS) form a disordered region. The N-linked (GlcNAc...) asparagine glycan is linked to N920. Residues 977 to 1027 (LTVKPESSLSSSTTSGLTSSSSTIPSSTRSESNSESASTSSASKRSSSSTS) show a composition bias toward low complexity. The interval 977 to 1031 (LTVKPESSLSSSTTSGLTSSSSTIPSSTRSESNSESASTSSASKRSSSSTSLVQS) is disordered.

Belongs to the SUN family.

It localises to the secreted. In terms of biological role, cell surface beta-glucosidase involved in cell wall biogenesis,. This Schizosaccharomyces pombe (strain 972 / ATCC 24843) (Fission yeast) protein is Probable secreted beta-glucosidase adg3 (adg3).